We begin with the raw amino-acid sequence, 74 residues long: Kappa-stichotoxin-Shd5a (74 aa).

An N-terminal signal peptide occupies residues 1 to 22 (MKFQVIAAVLLIAFCLCVVVTA). A propeptide spanning residues 23 to 39 (RMELQDVEDVENGFQKR) is cleaved from the precursor. One can recognise a ShKT domain in the interval 42 to 74 (CIDTIPQSRCTAFQCKHSMKYRLSFCRKTCGTC). 3 disulfide bridges follow: cysteine 42–cysteine 74, cysteine 51–cysteine 67, and cysteine 56–cysteine 71.

It belongs to the sea anemone type 1 potassium channel toxin family. Type 1a subfamily.

Its subcellular location is the secreted. It localises to the nematocyst. In terms of biological role, inhibits voltage-gated potassium channels (Kv) with higher potency for Kv1.1/KCNA1 and Kv1.3/KCNA3. This chain is Kappa-stichotoxin-Shd5a, found in Stichodactyla haddoni (Saddle carpet anemone).